The primary structure comprises 1208 residues: Calmodulin-binding transcription activator 2 (1208 aa).

Residues 30–160 (RCPLLPPERL…YLNVPALEDC (131 aa)) constitute a DNA-binding region (CG-1). A Nuclear localization signal motif is present at residues 78-86 (NRKKVKYRK). Disordered regions lie at residues 269–328 (ISHS…SRGG), 366–418 (VGSE…PCPA), and 437–507 (QLGA…ELEP). Positions 275-288 (PEPPPLIAPLPPEL) are enriched in pro residues. Composition is skewed to low complexity over residues 294–305 (SPSSSSSSSSSS) and 319–328 (TSRGGSSRGG). Composition is skewed to pro residues over residues 371 to 380 (SAPPAPPSPA) and 464 to 476 (TVPP…PSSP). In terms of domain architecture, IPT/TIG spans 544–622 (DFSPEWSYPE…LSASVLFEYR (79 aa)). ANK repeat units follow at residues 717-750 (RGMS…SLDL), 762-792 (FSCT…ALSI), and 796-826 (LGRL…ELSV). Disordered regions lie at residues 826–881 (VEHP…ASDI) and 908–936 (NSKE…DSPP). Residues 829–853 (PLALSPPSSSPDTGLSSASSPSELS) are compositionally biased toward low complexity. 2 IQ domains span residues 1054–1083 (LYEA…AAAV) and 1107–1136 (MTQA…AAVL). The segment at 1144–1166 (YRRRPGPPHRPSGPLPARNKGTF) is disordered.

The protein belongs to the CAMTA family. In terms of assembly, may interact with calmodulin.

The protein resides in the nucleus. Its function is as follows. Transcription activator. May act as tumor suppressor. This Mus musculus (Mouse) protein is Calmodulin-binding transcription activator 2 (Camta2).